A 552-amino-acid chain; its full sequence is Scaffold protein (552 aa).

The protein belongs to the poxviridae protein D13 family. In terms of assembly, homotrimer. Self-assembles to form a layer. Interacts with A17 (via N-terminus); this interaction is necessary for D13 association with membranes.

The protein resides in the membrane. Functionally, scaffold protein which forms a transitory spherical honeycomb lattice providing curvature and rigidity to the convex membrane of crescent and immature virions (IV). This association occurs concomitantly with viral membrane formation. Targeted by the drug rifampicin, which prevents the formation of this lattice, and hence virus morphogenesis. In the presence of rifampicin, irregularly shaped membranes that lack the honeycomb layer accumulate around areas of electron-dense viroplasm. This layer is lost from virions during maturation from IV to mature virion (MV), through the proteolysis of A17 N-terminus. This chain is Scaffold protein, found in Vertebrata (FPV).